The sequence spans 207 residues: Putative 3-methyladenine DNA glycosylase (207 aa).

This sequence belongs to the DNA glycosylase MPG family.

In Listeria welshimeri serovar 6b (strain ATCC 35897 / DSM 20650 / CCUG 15529 / CIP 8149 / NCTC 11857 / SLCC 5334 / V8), this protein is Putative 3-methyladenine DNA glycosylase.